A 475-amino-acid chain; its full sequence is Dihydrolipoyl dehydrogenase (475 aa).

FAD-binding positions include Glu-36–Cys-45, Lys-54, and Gly-117. Cys-45 and Cys-50 are oxidised to a cystine. NAD(+) contacts are provided by residues Gly-182 to Ile-186, Glu-205, Val-238, and Ala-270 to Arg-273. FAD contacts are provided by Asp-313 and Ala-321. Residue His-445 is the Proton acceptor of the active site.

This sequence belongs to the class-I pyridine nucleotide-disulfide oxidoreductase family. The cofactor is FAD.

The protein localises to the cytoplasm. The enzyme catalyses N(6)-[(R)-dihydrolipoyl]-L-lysyl-[protein] + NAD(+) = N(6)-[(R)-lipoyl]-L-lysyl-[protein] + NADH + H(+). Functionally, the branched-chain alpha-keto dehydrogenase complex catalyzes the overall conversion of alpha-keto acids to acyl-CoA and CO(2). It contains multiple copies of 3 enzymatic components: branched-chain alpha-keto acid decarboxylase (E1), lipoamide acyltransferase (E2) and lipoamide dehydrogenase (E3). The chain is Dihydrolipoyl dehydrogenase (lpd) from Vibrio parahaemolyticus serotype O3:K6 (strain RIMD 2210633).